The following is a 270-amino-acid chain: 3-methyl-2-oxobutanoate hydroxymethyltransferase (270 aa).

Residues Asp50 and Asp89 each contribute to the Mg(2+) site. 3-methyl-2-oxobutanoate contacts are provided by residues 50–51 (DS), Asp89, and Lys118. Glu120 is a binding site for Mg(2+). Glu187 serves as the catalytic Proton acceptor.

This sequence belongs to the PanB family. In terms of assembly, homodecamer; pentamer of dimers. Requires Mg(2+) as cofactor.

It localises to the cytoplasm. The catalysed reaction is 3-methyl-2-oxobutanoate + (6R)-5,10-methylene-5,6,7,8-tetrahydrofolate + H2O = 2-dehydropantoate + (6S)-5,6,7,8-tetrahydrofolate. The protein operates within cofactor biosynthesis; (R)-pantothenate biosynthesis; (R)-pantoate from 3-methyl-2-oxobutanoate: step 1/2. Catalyzes the reversible reaction in which hydroxymethyl group from 5,10-methylenetetrahydrofolate is transferred onto alpha-ketoisovalerate to form ketopantoate. This is 3-methyl-2-oxobutanoate hydroxymethyltransferase from Helicobacter pylori (strain HPAG1).